Reading from the N-terminus, the 186-residue chain is MTDCSRCAGTNTSGPNHWPERIRDIVDFPKPGIVFKDITPLLSDGPDFASALDEMAQPWRTTPLDAVLGIEARGFILGAALARELRTGFVPVRKPGKLPGRTLIQEYALEYGTDRIEMHEDALPRGARVLIVDDVLATGGTLRAALGLAAQLELEVVGAAVLVELQGLQGRQKWANDVPLLATLSY.

It belongs to the purine/pyrimidine phosphoribosyltransferase family. In terms of assembly, homodimer.

Its subcellular location is the cytoplasm. The catalysed reaction is AMP + diphosphate = 5-phospho-alpha-D-ribose 1-diphosphate + adenine. Its pathway is purine metabolism; AMP biosynthesis via salvage pathway; AMP from adenine: step 1/1. Functionally, catalyzes a salvage reaction resulting in the formation of AMP, that is energically less costly than de novo synthesis. The chain is Adenine phosphoribosyltransferase from Xanthomonas axonopodis pv. citri (strain 306).